The following is a 420-amino-acid chain: Deoxyribodipyrimidine photo-lyase (420 aa).

Positions 2–124 constitute a Photolyase/cryptochrome alpha/beta domain; it reads GPLLVWHRGD…PLHLLPAPHL (123 aa). Positions 152 to 175 are disordered; that stretch reads APEALPKGPEEGEIPREDPGLPLP. The span at 159 to 170 shows a compositional bias: basic and acidic residues; it reads GPEEGEIPREDP. Tyr197 is a binding site for FAD. DNA is bound at residue Arg201. 209–213 provides a ligand contact to FAD; that stretch reads GSRLS. Interaction with DNA stretches follow at residues 244–251 and 310–311; these read ELLWRDFS and NR. 341–343 lines the FAD pocket; it reads DGD. Residue Gln373 coordinates DNA.

This sequence belongs to the DNA photolyase class-1 family. Monomer. The cofactor is FAD.

The catalysed reaction is cyclobutadipyrimidine (in DNA) = 2 pyrimidine residues (in DNA).. Functionally, involved in repair of UV radiation-induced DNA damage. Catalyzes the light-dependent monomerization (300-600 nm) of cyclobutyl pyrimidine dimers (in cis-syn configuration), which are formed between adjacent bases on the same DNA strand upon exposure to ultraviolet radiation. This chain is Deoxyribodipyrimidine photo-lyase (phr), found in Thermus thermophilus (strain ATCC BAA-163 / DSM 7039 / HB27).